Consider the following 151-residue polypeptide: Large ribosomal subunit protein bL9 (151 aa).

Belongs to the bacterial ribosomal protein bL9 family.

Binds to the 23S rRNA. This chain is Large ribosomal subunit protein bL9, found in Prochlorococcus marinus (strain AS9601).